The following is a 137-amino-acid chain: Flagellar basal body rod protein FlgB (137 aa).

The protein belongs to the flagella basal body rod proteins family. The basal body constitutes a major portion of the flagellar organelle and consists of a number of rings mounted on a central rod. In Gram-negative bacteria, at least four rings, L, P, S and M are present, whereas Gram-positive bacteria lack the L and P rings. The rod consists of about 26 subunits of FlgG in the distal portion, and FlgB, FlgC and FlgF build up the proximal portion of the rod with about 6 subunits each. Rod assembly occurs by export via the flagellum-specific pathway of its constituent proteins and by their incorporation into the rod structure in the probable order of FlgB, FlgC, FlgF and FlgG. Another protein, FliE, also assembles onto the stable rod structure.

It localises to the bacterial flagellum basal body. Functionally, structural component of flagellum, the bacterial motility apparatus. Part of the rod structure of flagellar basal body. This chain is Flagellar basal body rod protein FlgB, found in Yersinia ruckeri.